The primary structure comprises 179 residues: MECMAVNDISYGREAEIWPRDYSMLARRVQFLRFNDIPVRLVSNNARIITGYIAKFNPKENLILASDKPKGNKRIEVKLESLAILEELSGNDAFNLSLVPADGFNLQQYTPSRRDYFSICNKCYKQGVGIKIYMKYGQVLTGKTTGVNACQVGVRTSNGNHMQVMFDWVSRITSSDYAE.

Functionally, transcriptional repressor of the FliC phase-1 flagellin. In Salmonella typhimurium (strain LT2 / SGSC1412 / ATCC 700720), this protein is Repressor of phase 1 flagellin gene (fljA).